A 155-amino-acid chain; its full sequence is Ribosome maturation factor RimP (155 aa).

This sequence belongs to the RimP family.

The protein localises to the cytoplasm. Functionally, required for maturation of 30S ribosomal subunits. The sequence is that of Ribosome maturation factor RimP from Listeria monocytogenes serotype 4b (strain CLIP80459).